The following is a 376-amino-acid chain: Mitogen-activated protein kinase 4 (376 aa).

A Protein kinase domain is found at 43 to 329; it reads VPPLRPIGRG…VDEALCHPYL (287 aa). Residues 49–57 and lysine 72 contribute to the ATP site; that span reads IGRGAYGIV. Residue aspartate 169 is the Proton acceptor of the active site. Threonine 201 bears the Phosphothreonine mark. The short motif at 201–203 is the TXY element; sequence TEY. Position 203 is a phosphotyrosine (tyrosine 203).

It belongs to the protein kinase superfamily. CMGC Ser/Thr protein kinase family. MAP kinase subfamily. In terms of assembly, interacts with MEKK1, MKK1, MKK2 and MKK6. May form a ternary complex composed of MEKK1 and MKK1/MKK2 and MPK4. Interacts with MKS1 and AP2C1. May form a ternary or larger complex with MKS1 and WRKY25 and/or WRKY33. Interacts with MAP65-1. No interactions with RACK1A, RACK1B or RACK1C. Interacts directly with ASR3 and mediates its phosphorylation. Binds to MEKK2. Interacts with PAT1. Binds to HT1. Post-translationally, dually phosphorylated on Thr-201 and Tyr-203, which activates the enzyme. Autophosphorylated on serine and tyrosine residues. Dephosphorylated by DSPTP1. Phosphorylated by MKK6 in vitro. In terms of tissue distribution, ubiquitous. Expressed in the veins and stomatal guard cells of leaf plates, petioles, stem, roots and flowers.

It localises to the cytoplasm. It is found in the nucleus. The protein resides in the cytoskeleton. It carries out the reaction L-seryl-[protein] + ATP = O-phospho-L-seryl-[protein] + ADP + H(+). It catalyses the reaction L-threonyl-[protein] + ATP = O-phospho-L-threonyl-[protein] + ADP + H(+). Its activity is regulated as follows. Activated by threonine and tyrosine phosphorylation. Activated by the MAP kinase kinases MKK1 and MKK2. Activated in response to touch, wounding, low temperature, low humidity, salt stress and the bacterial elicitors flagellin and harpin. Activated upon Pseudomonas syringae pv. tomato DC3000 infection. Repressed by the protein phosphatase 2C AP2C1. Repressed by DSPTP1-mediated dephosphorylation. Activated by the MAP kinase kinase MKK6 in vitro. The ANPs-MKK6-MPK4 module is involved in the regulation of plant cytokinesis during meiosis and mitosis. Essential to promote the progression of cytokinesis and for cellularization (formation of the cell plate) during male-specific meiosis. Involved in cortical microtubules organization and stabilization by regulating the phosphorylation state of microtubule-associated proteins such as MAP65-1. Involved in root hair development process. Negative regulator of systemic acquired resistance (SAR) and salicylic acid- (SA) mediated defense response. Required for jasmonic acid- (JA) mediated defense gene expression. May regulate activity of transcription factor controlling pathogenesis-related (PR) gene expression. Seems to act independently of the SAR regulatory protein NPR1 (Nonexpresser of PR1). Phosphorylates MKS1 and transcription factors WRKY25 and WRKY33. The MEKK1, MKK1/MKK2 and MPK4 function in a signaling pathway that modulates the expression of genes responding to biotic and abiotic stresses and also plays an important role in pathogen defense by negatively regulating innate immunity. Phosphorylates MEKK2 upon treatment with flg22. Involved in stomatal movement regulation by repressing HT1 and HT1-mediated GHR1 phosphorylation. This Arabidopsis thaliana (Mouse-ear cress) protein is Mitogen-activated protein kinase 4.